The following is a 660-amino-acid chain: Genome-linked protein precursor (660 aa).

The signal sequence occupies residues 1–25 (MALLGIKLMTLVFAAWLSCCHSSSA). 2 consecutive transmembrane segments (helical) span residues 131–151 (AVGM…LVVY) and 165–185 (AVCV…ISWI). A Peptidase S39 domain is found at 224 to 416 (VEGYKPFIIP…GLTSPDFKFE (193 aa)). Active-site for protease activity residues include His-272, Asp-304, and Ser-373. 2 disordered regions span residues 463–490 (EEES…GCPP) and 595–660 (TKAP…AWVR).

It belongs to the peptidase S39B family.

It localises to the host membrane. Precursor from which the VPg molecule is probably released at the onset of the RNA synthesis. Essential for virus replication. The protein is Genome-linked protein precursor of Euphorbia pulcherrima (Poinsettia).